We begin with the raw amino-acid sequence, 471 residues long: U1 small nuclear ribonucleoprotein 70 kDa (471 aa).

Residues 48 to 78 (FEDPRDAPPPTRAETREERMERKRREKIERR) are disordered. Over residues 60-78 (AETREERMERKRREKIERR) the composition is skewed to basic and acidic residues. Residues 92–205 (HNDQNAQGDA…GGGLGGTRRG (114 aa)) are required for interaction with U1 RNA. Positions 103 to 184 (KTLFVARVNY…RRVLVDVERG (82 aa)) constitute an RRM domain. The interval 190 to 471 (WRPRRLGGGL…NGYMMEPPME (282 aa)) is disordered. Residues 195 to 204 (LGGGLGGTRR) are compositionally biased toward gly residues. Basic and acidic residues predominate over residues 210 to 246 (NIRHSGRDDTSRYDERDRERERDRRERSREREKEPRE). The span at 247 to 261 (RRRSRSRERRRKSRS) shows a compositional bias: basic residues. Residues 262–288 (REKEERKRTREKSKDKDKEKDKDNKDR) show a composition bias toward basic and acidic residues. Basic residues predominate over residues 289–298 (DRKRRSRSRE). Over residues 299–316 (RKRERDRDREKKEERVEA) the composition is skewed to basic and acidic residues. Residues 317 to 326 (EVPEADDAPQ) show a composition bias toward acidic residues. The segment covering 339 to 428 (IELKQEPEEK…RSEKREERVP (90 aa)) has biased composition (basic and acidic residues).

Component of the U1 snRNP. The U1 snRNP is composed of the U1 snRNA and the 7 core Sm proteins snrpb, snrpd1, snrpd2, snrpd3, snrpe, snrpf and snrpg that assemble in a heptameric protein ring on the Sm site of the small nuclear RNA to form the core snRNP, and at least three U1 snRNP-specific proteins snrnp70/U1-70K, snrpa/U1-A and snrpc/U1-C.

The protein resides in the nucleus speckle. It is found in the nucleus. It localises to the nucleoplasm. Functionally, component of the spliceosomal U1 snRNP, which is essential for recognition of the pre-mRNA 5' splice-site and the subsequent assembly of the spliceosome. snrnp70 binds to the loop I region of U1-snRNA. This chain is U1 small nuclear ribonucleoprotein 70 kDa (snrnp70), found in Xenopus laevis (African clawed frog).